The chain runs to 201 residues: Ras-related protein Ral-a (201 aa).

Residue 18 to 25 (GSGGVGKS) coordinates GTP. The Effector region motif lies at 40-48 (YEPTKADSY). Residues 65–69 (DTAGQ) and 124–127 (NKCD) each bind GTP. At Cys198 the chain carries Cysteine methyl ester. Residue Cys198 is the site of S-geranylgeranyl cysteine attachment. A propeptide spans 199–201 (TLL) (removed in mature form).

This sequence belongs to the small GTPase superfamily. Ras family.

The protein localises to the cell membrane. Its subcellular location is the cleavage furrow. It localises to the midbody. The protein resides in the midbody ring. The enzyme catalyses GTP + H2O = GDP + phosphate + H(+). The chain is Ras-related protein Ral-a (Rala) from Drosophila melanogaster (Fruit fly).